The following is a 1197-amino-acid chain: Transient receptor potential cation channel subfamily A member 1 (1197 aa).

Over 1–753 (MTSGDKETPK…KWNSYGKYFH (753 aa)) the chain is Cytoplasmic. ANK repeat units follow at residues 89 to 118 (KGRT…DFNA), 122 to 151 (AGNT…DTGV), 155 to 184 (KKQA…VIDI), 190 to 219 (HGRT…ACPR), 224 to 253 (NGYY…QRGC), 265 to 294 (EGNV…KIST), 298 to 327 (DLST…MEKR), 336 to 365 (QKMT…DINA), 369 to 398 (EHRS…CISV), 443 to 472 (MGCS…CINL), 476 to 505 (NNES…GSFI), 512 to 541 (AGMT…LLHR), 544 to 574 (TGRN…LLDQ), and 578 to 607 (DGNT…KLVY). The chain crosses the membrane as a helical span at residues 754–774 (LANLLIYSIFLVFVTIYSSLM). Topologically, residues 775–827 (MNNIELKAGDNKTMSQYCNMGWEQLTMNLSQNPSVASQIRLDSCEERINRTTA) are extracellular. 3 N-linked (GlcNAc...) asparagine glycosylation sites follow: N785, N802, and N823. A helical transmembrane segment spans residues 828 to 848 (ILFCAVVIVVYILLNSMRELI). Residues 849-856 (QIYQQKLH) are Cytoplasmic-facing. Residues 857-877 (YILETVNLISWVLYISALVMV) form a helical membrane-spanning segment. Over 878–889 (TPAFQPDGGINT) the chain is Extracellular. A helical membrane pass occupies residues 890–910 (IHYSAASIAVFLSWFRLLLFL). The Cytoplasmic segment spans residues 911–932 (QRFDQVGIYVVMFLEILQTLIK). Residues 933–953 (VLMVFSILIIAFGLAFYILLS) traverse the membrane as a helical segment. At 954-968 (KIIDPQPNHLSFSNI) the chain is on the extracellular side. Residues 969–989 (PMSLLRTFSMMLGELDFVGTY) constitute an intramembrane region (pore-forming). Over 990–1004 (VNTYYRDQLKVPMTS) the chain is Extracellular. Residues 1005-1025 (FLILSVFMILMPILLMNLLIG) form a helical membrane-spanning segment. The Cytoplasmic segment spans residues 1026-1197 (LAVGDIESVR…RAALSFNKSM (172 aa)).

Belongs to the transient receptor (TC 1.A.4) family. In terms of assembly, homotetramer.

It is found in the cell membrane. Essential for thermotaxis by sensing environmental temperature. Receptor-activated non-selective cation channel involved in detection of sensations such as temperature. Involved in heat nociception by being activated by warm temperature of about 24-29 degrees Celsius. This chain is Transient receptor potential cation channel subfamily A member 1 (TrpA1), found in Drosophila melanogaster (Fruit fly).